A 1249-amino-acid chain; its full sequence is Cell adhesion molecule-related/down-regulated by oncogenes (1249 aa).

The first 25 residues, 1–25, serve as a signal peptide directing secretion; it reads MHSDPGPWHPLLCFLVLALSTSANS. Residues 26 to 957 are Extracellular-facing; it reads DVTPRFTSKP…PSHSPTRNGD (932 aa). Ig-like C2-type domains follow at residues 29 to 113, 120 to 212, 217 to 307, 314 to 400, and 406 to 517; these read PRFT…KSVS, NDFE…LKLS, PRVD…VYYT, PSVS…ATVH, and PVIV…AYLT. Intrachain disulfides connect Cys50–Cys98, Cys142–Cys192, and Cys244–Cys292. N-linked (GlcNAc...) asparagine glycans are attached at residues Asn181, Asn289, Asn296, Asn344, and Asn428. 2 cysteine pairs are disulfide-bonded: Cys335-Cys382 and Cys427-Cys501. 2 disordered regions span residues 528 to 585 and 671 to 690; these read EDIT…SPPQ and TSKE…PPIG. Residues 545–566 show a composition bias toward basic and acidic residues; it reads SETRVPDHSQINEHKPEPRVTE. 3 consecutive Fibronectin type-III domains span residues 577–675, 721–815, and 826–923; these read APII…SKER, APDR…VAGY, and GPRI…TKAR. Asn870 carries N-linked (GlcNAc...) asparagine glycosylation. The interval 929–952 is disordered; it reads SEYPVLDLSTPSVPDRSSSPSHSP. Residues 937-952 are compositionally biased toward low complexity; sequence STPSVPDRSSSPSHSP. Residues 958–978 form a helical membrane-spanning segment; that stretch reads FLYVIVGCVLGGMVLILLAFI. At 979–1249 the chain is on the cytoplasmic side; it reads AMCLLKNRQQ…DHPQLQTQEA (271 aa). The interval 1158 to 1202 is disordered; that stretch reads NCSEEIEEDQNEKETQLSANSVCPEEATQTGTEQHEGEDCTKTED. The segment covering 1159–1168 has biased composition (acidic residues); that stretch reads CSEEIEEDQN. Residues 1173–1189 show a composition bias toward polar residues; the sequence is QLSANSVCPEEATQTGT. A compositionally biased stretch (basic and acidic residues) spans 1190–1202; that stretch reads EQHEGEDCTKTED.

The protein localises to the cell membrane. Its function is as follows. Component of a cell-surface receptor complex that mediates cell-cell interactions between muscle precursor cells. Promotes differentiation of myogenic cells. The protein is Cell adhesion molecule-related/down-regulated by oncogenes (cdon) of Xenopus laevis (African clawed frog).